Reading from the N-terminus, the 494-residue chain is MFYPTLDEVKIMAKDYNIIPVTMEVYADMETPISLFKRFEESSCCFLLESVEGGEKWARYSIIGKNPFLVVESYKNKTIIRERNGSQREVEGNPVEIIKGIMGKFKGANLPNLPRFNGGAVGYFGYDLIRHYENLPNVPEDDMGLPECHFMFTDEVLVYDHLKQKIHIIVNLHVNGNIERAYISAVDRIKTIHREILDTRWKTADNSVLSYNKKKNELAVTSNISKEDFCRNVLKAKQYIRDGDIFQVVLSQRLCVETNENPFNIYRALRVINPSPYMYYLKFGGYRIIGSSPEMLVRVENGIVETCPIAGTRKRGRTKEEDEALEKELLSDEKEIAEHVMLVDLGRNDIGRVSKFGTVAVKNLMHIERYSHVMHVVTNVQGEIREDKTPFDALMSILPAGTLSGAPKVRAMEIIDELETVKRGPYGGAIGYLSFNGNLDSCITIRTIILKDGKAYVQAGAGIVADSVPEREYEECYNKAMALLKAIEEAGEIR.

L-tryptophan contacts are provided by residues Ser50 and Pro276 to Met278. Residue Gly311–Thr312 coordinates chorismate. Mg(2+) is bound at residue Glu338. Chorismate is bound by residues Tyr426, Arg446, Gly460–Gly462, and Gly462. Glu475 provides a ligand contact to Mg(2+).

The protein belongs to the anthranilate synthase component I family. Heterotetramer consisting of two non-identical subunits: a beta subunit (TrpG) and a large alpha subunit (TrpE). It depends on Mg(2+) as a cofactor.

It carries out the reaction chorismate + L-glutamine = anthranilate + pyruvate + L-glutamate + H(+). Its pathway is amino-acid biosynthesis; L-tryptophan biosynthesis; L-tryptophan from chorismate: step 1/5. Its activity is regulated as follows. Feedback inhibited by tryptophan. In terms of biological role, part of a heterotetrameric complex that catalyzes the two-step biosynthesis of anthranilate, an intermediate in the biosynthesis of L-tryptophan. In the first step, the glutamine-binding beta subunit (TrpG) of anthranilate synthase (AS) provides the glutamine amidotransferase activity which generates ammonia as a substrate that, along with chorismate, is used in the second step, catalyzed by the large alpha subunit of AS (TrpE) to produce anthranilate. In the absence of TrpG, TrpE can synthesize anthranilate directly from chorismate and high concentrations of ammonia. The chain is Anthranilate synthase component 1 (trpE) from Acetivibrio thermocellus (Hungateiclostridium thermocellum).